A 1040-amino-acid polypeptide reads, in one-letter code: Probable starch synthase 4, chloroplastic/amyloplastic (1040 aa).

Residues 1 to 42 (MTTKLSSFCFLTHGLAGISCEREHGSSRRFFYLPSRRLVSTS) constitute a chloroplast transit peptide. The disordered stretch occupies residues 43–142 (CKMRQQRGFD…KSKTAKKKGE (100 aa)). Basic and acidic residues-rich tracts occupy residues 52-61 (DSSKRQEVKK) and 112-124 (NHADENLEKKDDI). Residues 187 to 466 (ELMTMIRSAE…EESKKKSRDE (280 aa)) adopt a coiled-coil conformation. ADP-binding residues include Lys-556, Gly-559, and Asp-562. Residues Trp-679 and Gln-680 each coordinate (1,4-alpha-D-glucosyl)n. ADP is bound by residues Arg-849, Lys-854, Lys-906, Asp-908, Tyr-916, Leu-933, and Thr-934.

It belongs to the glycosyltransferase 1 family. Bacterial/plant glycogen synthase subfamily. As to quaternary structure, interacts with PTST2. Interacts with PII1; the interaction is essential for the initiation of starch granules biosynthesis in leaf chloroplasts. As to expression, expressed in leaves and flowers.

The protein resides in the plastid. The protein localises to the chloroplast. It localises to the amyloplast. It is found in the chloroplast stroma. It catalyses the reaction [(1-&gt;4)-alpha-D-glucosyl](n) + ADP-alpha-D-glucose = [(1-&gt;4)-alpha-D-glucosyl](n+1) + ADP + H(+). It participates in glycan biosynthesis; starch biosynthesis. Its function is as follows. Probably involved in the priming of starch granule formation. May play a regulatory role in the control of starch accumulation in plastids. Is necessary and sufficient to establish the correct number of starch granules observed in chloroplasts. This is Probable starch synthase 4, chloroplastic/amyloplastic from Arabidopsis thaliana (Mouse-ear cress).